Reading from the N-terminus, the 491-residue chain is Cysteine--tRNA ligase (491 aa).

C31 contacts Zn(2+). A 'HIGH' region motif is present at residues 33–43; it reads PTVYGDAHLGH. The Zn(2+) site is built by C226, H251, and E255. The 'KMSKS' region signature appears at 283-287; that stretch reads KMGKS. K286 lines the ATP pocket.

Belongs to the class-I aminoacyl-tRNA synthetase family. Monomer. Zn(2+) is required as a cofactor.

The protein localises to the cytoplasm. It catalyses the reaction tRNA(Cys) + L-cysteine + ATP = L-cysteinyl-tRNA(Cys) + AMP + diphosphate. In Bacteroides fragilis (strain ATCC 25285 / DSM 2151 / CCUG 4856 / JCM 11019 / LMG 10263 / NCTC 9343 / Onslow / VPI 2553 / EN-2), this protein is Cysteine--tRNA ligase.